Here is a 1908-residue protein sequence, read N- to C-terminus: Putative ankyrin repeat protein L484 (1908 aa).

ANK repeat units lie at residues 20 to 50 (DIME…KFNI), 60 to 97 (PNKT…PMDL), 101 to 130 (DNVW…SIDR), 134 to 167 (SNNT…DIDK), and 1370 to 1399 (DGNT…NPFT). Positions 1539-1603 (VQLLNPKLRD…QTNISDLEFK (65 aa)) form a coiled coil.

Its subcellular location is the virion. In Acanthamoeba polyphaga mimivirus (APMV), this protein is Putative ankyrin repeat protein L484.